A 354-amino-acid chain; its full sequence is Probable L-ascorbate-6-phosphate lactonase UlaG (354 aa).

The protein belongs to the UlaG family. It depends on a divalent metal cation as a cofactor.

It localises to the cytoplasm. The enzyme catalyses L-ascorbate 6-phosphate + H2O = 3-dehydro-L-gulonate 6-phosphate. Its pathway is cofactor degradation; L-ascorbate degradation; D-xylulose 5-phosphate from L-ascorbate: step 1/4. Probably catalyzes the hydrolysis of L-ascorbate-6-P into 3-keto-L-gulonate-6-P. Is essential for L-ascorbate utilization under anaerobic conditions. This chain is Probable L-ascorbate-6-phosphate lactonase UlaG, found in Shigella dysenteriae serotype 1 (strain Sd197).